The primary structure comprises 445 residues: 3-dehydroquinate synthase, chloroplastic (445 aa).

Residues 1–68 constitute a chloroplast transit peptide; it reads MAAFSLSAKQ…RASASSTAPV (68 aa). Residues Asn122, 153-155, Lys158, 186-191, 211-212, Lys224, Lys233, and 251-254 contribute to the NAD(+) site; these read DGE, GGVIGD, TT, and TLNT. Glu266 contacts a divalent metal cation. Position 308 (Lys308) interacts with NAD(+). Residues His329 and His346 each coordinate a divalent metal cation.

Belongs to the sugar phosphate cyclases superfamily. Dehydroquinate synthase family. As to quaternary structure, homodimer. Requires a divalent metal cation as cofactor. NAD(+) is required as a cofactor.

The protein localises to the plastid. The protein resides in the chloroplast. It catalyses the reaction 7-phospho-2-dehydro-3-deoxy-D-arabino-heptonate = 3-dehydroquinate + phosphate. It participates in metabolic intermediate biosynthesis; chorismate biosynthesis; chorismate from D-erythrose 4-phosphate and phosphoenolpyruvate: step 2/7. Functionally, catalyzes the second step in the shikimate pathway. In Actinidia chinensis var. chinensis (Chinese soft-hair kiwi), this protein is 3-dehydroquinate synthase, chloroplastic (DHQS).